The sequence spans 493 residues: 3-octaprenyl-4-hydroxybenzoate carboxy-lyase (493 aa).

Asn172 lines the Mn(2+) pocket. Prenylated FMN-binding positions include 175–177 (IYR), 189–191 (RWL), and 194–195 (RG). Position 238 (Glu238) interacts with Mn(2+). Catalysis depends on Asp287, which acts as the Proton donor.

It belongs to the UbiD family. Homohexamer. The cofactor is prenylated FMN. Requires Mn(2+) as cofactor.

It localises to the cell membrane. It catalyses the reaction a 4-hydroxy-3-(all-trans-polyprenyl)benzoate + H(+) = a 2-(all-trans-polyprenyl)phenol + CO2. It functions in the pathway cofactor biosynthesis; ubiquinone biosynthesis. Catalyzes the decarboxylation of 3-octaprenyl-4-hydroxy benzoate to 2-octaprenylphenol, an intermediate step in ubiquinone biosynthesis. In Shewanella woodyi (strain ATCC 51908 / MS32), this protein is 3-octaprenyl-4-hydroxybenzoate carboxy-lyase.